The chain runs to 659 residues: Putative RING finger protein R311 (659 aa).

An RING-type zinc finger spans residues 502–540; sequence CPVCYDDDYIKTKLICGHTVCLTCVLNILPNSKGCPLCM.

This chain is Putative RING finger protein R311, found in Acanthamoeba polyphaga (Amoeba).